The primary structure comprises 1061 residues: Bifunctional cytochrome P450/NADPH--P450 reductase 1 (1061 aa).

The segment at 1–475 (MKETSPIPQP…AEKAAPDEQK (475 aa)) is cytochrome P450. Heme is bound at residue Cys403. The NADPH--P450 reductase stretch occupies residues 476-1061 (EKTEAKGASV…MYAKDVWAGI (586 aa)). Positions 493 to 632 (LLVLYGSDTG…QLDEWKKSMW (140 aa)) constitute a Flavodoxin-like domain. FMN contacts are provided by residues 499–504 (SDTGTA), 546–549 (SYNG), 580–582 (CGD), and 588–590 (TYQ). The FAD-binding FR-type domain occupies 671–904 (YEASHASIAE…RTPESRFQLP (234 aa)).

In the N-terminal section; belongs to the cytochrome P450 family. Requires FAD as cofactor. FMN is required as a cofactor. The cofactor is heme b.

The protein resides in the cytoplasm. The catalysed reaction is an organic molecule + reduced [NADPH--hemoprotein reductase] + O2 = an alcohol + oxidized [NADPH--hemoprotein reductase] + H2O + H(+). It catalyses the reaction 2 oxidized [cytochrome P450] + NADPH = 2 reduced [cytochrome P450] + NADP(+) + H(+). Functions as a fatty acid monooxygenase. Catalyzes hydroxylation of a range of long-chain fatty acids, with a preference for long-chain unsaturated and branched-chain fatty acids over saturated fatty acids. Hydroxylation of myristic acid occurs mainly at the omega-2 position. Also displays a NADPH-dependent reductase activity in the C-terminal domain, which allows electron transfer from NADPH to the heme iron of the cytochrome P450 N-terminal domain. Is also able to catalyze efficient oxidation of sodium dodecyl sulfate (SDS). This chain is Bifunctional cytochrome P450/NADPH--P450 reductase 1, found in Bacillus subtilis (strain 168).